A 130-amino-acid polypeptide reads, in one-letter code: S-adenosylmethionine decarboxylase proenzyme (130 aa).

The active-site Schiff-base intermediate with substrate; via pyruvic acid is Ser-64. Residue Ser-64 is modified to Pyruvic acid (Ser); by autocatalysis. Catalysis depends on His-69, which acts as the Proton acceptor; for processing activity. Cys-84 (proton donor; for catalytic activity) is an active-site residue.

The protein belongs to the prokaryotic AdoMetDC family. Type 1 subfamily. As to quaternary structure, heterotetramer of two alpha and two beta chains arranged as a dimer of alpha/beta heterodimers. It depends on pyruvate as a cofactor. In terms of processing, is synthesized initially as an inactive proenzyme. Formation of the active enzyme involves a self-maturation process in which the active site pyruvoyl group is generated from an internal serine residue via an autocatalytic post-translational modification. Two non-identical subunits are generated from the proenzyme in this reaction, and the pyruvate is formed at the N-terminus of the alpha chain, which is derived from the carboxyl end of the proenzyme. The post-translation cleavage follows an unusual pathway, termed non-hydrolytic serinolysis, in which the side chain hydroxyl group of the serine supplies its oxygen atom to form the C-terminus of the beta chain, while the remainder of the serine residue undergoes an oxidative deamination to produce ammonia and the pyruvoyl group blocking the N-terminus of the alpha chain.

The catalysed reaction is S-adenosyl-L-methionine + H(+) = S-adenosyl 3-(methylsulfanyl)propylamine + CO2. It participates in amine and polyamine biosynthesis; S-adenosylmethioninamine biosynthesis; S-adenosylmethioninamine from S-adenosyl-L-methionine: step 1/1. Catalyzes the decarboxylation of S-adenosylmethionine to S-adenosylmethioninamine (dcAdoMet), the propylamine donor required for the synthesis of the polyamines spermine and spermidine from the diamine putrescine. The protein is S-adenosylmethionine decarboxylase proenzyme of Picrophilus torridus (strain ATCC 700027 / DSM 9790 / JCM 10055 / NBRC 100828 / KAW 2/3).